Consider the following 322-residue polypeptide: MSSSEEDDGYVPFSKRPEWSDVKPLAQDDGPHPICPILYSEVFKDKMNYFRAILKSKEKSLRVLDLLEEVIQENPSNYTIWYYRREVLKAIEQDETIEYDIQQEMNLLNDMGETDPKNYQIWNHRRFIVEKYIGSDNKEKEFLSGVLLEDAKNYHAWSHRQWLLKTYRDWNGELAMVDKLLSLDHRNNSVWNHRFFVISNLNPSPFPLSLIEREVEFAFNHIRHSPNNESPWSYLKGLFKGQKISTIYPSLLDILLEMKSKYIGCSHVNSIILDIYQEQNTKISLENSLNICKLLSETIDPIHKNYWNFKYNTISDQLKLIN.

The interval 1–27 (MSSSEEDDGYVPFSKRPEWSDVKPLAQ) is disordered. PFTA repeat units follow at residues 62-95 (RVLD…EQDE), 103-136 (QEMN…IGSD), 138-171 (KEKE…RDWN), 173-205 (ELAM…NPSP), 213-246 (REVE…KIST), and 287-321 (NSLN…LKLI).

It belongs to the protein prenyltransferase subunit alpha family. As to quaternary structure, heterodimer of fntA and fntB (farnesyltransferase). Heterodimer of an alpha and a beta subunit. The cofactor is Mg(2+).

It catalyses the reaction L-cysteinyl-[protein] + (2E,6E)-farnesyl diphosphate = S-(2E,6E)-farnesyl-L-cysteinyl-[protein] + diphosphate. The catalysed reaction is geranylgeranyl diphosphate + L-cysteinyl-[protein] = S-geranylgeranyl-L-cysteinyl-[protein] + diphosphate. In terms of biological role, catalyzes the transfer of a farnesyl or geranyl-geranyl moiety from farnesyl or geranyl-geranyl diphosphate to a cysteine at the fourth position from the C-terminus of several proteins having the C-terminal sequence Cys-aliphatic-aliphatic-X. The alpha subunit is thought to participate in a stable complex with the substrate. The beta subunit binds the peptide substrate. The polypeptide is Protein farnesyltransferase/geranylgeranyltransferase type-1 subunit alpha (fntA) (Dictyostelium discoideum (Social amoeba)).